We begin with the raw amino-acid sequence, 366 residues long: Molybdopterin synthase catalytic subunit (366 aa).

Substrate is bound by residues 101 to 102 (HR), Lys-117, and 124 to 126 (KKE).

It belongs to the MoaE family. MOCS2B subfamily. Heterotetramer; composed of 2 small (Mocs2A) and 2 large (Mocs2B) subunits.

The protein resides in the cytoplasm. The catalysed reaction is 2 [molybdopterin-synthase sulfur-carrier protein]-C-terminal-Gly-aminoethanethioate + cyclic pyranopterin phosphate + H2O = molybdopterin + 2 [molybdopterin-synthase sulfur-carrier protein]-C-terminal Gly-Gly + 2 H(+). It participates in cofactor biosynthesis; molybdopterin biosynthesis. Functionally, catalytic subunit of the molybdopterin synthase complex, a complex that catalyzes the conversion of precursor Z into molybdopterin. Acts by mediating the incorporation of 2 sulfur atoms from thiocarboxylated Mocs2A into precursor Z to generate a dithiolene group. The polypeptide is Molybdopterin synthase catalytic subunit (Drosophila mojavensis (Fruit fly)).